Here is a 293-residue protein sequence, read N- to C-terminus: N-acetylmannosamine kinase (293 aa).

Residues 5–12 and 133–140 contribute to the ATP site; these read AIDIGGTK and GVGGGLVI. Residues H157, C167, C169, and C174 each coordinate Zn(2+).

This sequence belongs to the ROK (NagC/XylR) family. NanK subfamily. In terms of assembly, homodimer.

The enzyme catalyses an N-acyl-D-mannosamine + ATP = an N-acyl-D-mannosamine 6-phosphate + ADP + H(+). It participates in amino-sugar metabolism; N-acetylneuraminate degradation; D-fructose 6-phosphate from N-acetylneuraminate: step 2/5. Its function is as follows. Catalyzes the phosphorylation of N-acetylmannosamine (ManNAc) to ManNAc-6-P. The sequence is that of N-acetylmannosamine kinase from Vibrio vulnificus (strain CMCP6).